We begin with the raw amino-acid sequence, 560 residues long: Poly(3-hydroxyalkanoate) polymerase 2 (560 aa).

Cysteine 296 is an active-site residue.

This sequence belongs to the PHA/PHB synthase family. Type II PhaC subfamily.

Its pathway is biopolymer metabolism; poly-(R)-3-hydroxybutanoate biosynthesis. In terms of biological role, synthesizes poly(3-hydroxyalkanoates) (PHA), complements a mutant of P.putida that does not make PHA. In Ectopseudomonas oleovorans (Pseudomonas oleovorans), this protein is Poly(3-hydroxyalkanoate) polymerase 2.